Consider the following 449-residue polypeptide: Alginate biosynthesis transcriptional regulatory protein AlgB (449 aa).

The Response regulatory domain occupies 10–124 (RILLVDDESA…QLRLAAAKQL (115 aa)). D59 is subject to 4-aspartylphosphate. Residues 147 to 376 (LESHSPAMAA…LRNVIERASI (230 aa)) form the Sigma-54 factor interaction domain. ATP is bound by residues 175 to 182 (GESGSGKG) and 238 to 247 (ADGGTLFLDE). Residues 426–445 (LDQAAKTLGIDASTLYRKRK) constitute a DNA-binding region (H-T-H motif).

Post-translationally, phosphorylated by KinB.

It functions in the pathway glycan biosynthesis; alginate biosynthesis [regulation]. Functionally, member of the two-component regulatory system AlgB/KinB involved in regulation of alginate biosynthesis genes. Positive regulator of the alginate biosynthetic gene AlgD. This chain is Alginate biosynthesis transcriptional regulatory protein AlgB (algB), found in Pseudomonas aeruginosa (strain ATCC 15692 / DSM 22644 / CIP 104116 / JCM 14847 / LMG 12228 / 1C / PRS 101 / PAO1).